The chain runs to 376 residues: Putative transcription factor egl-18 (376 aa).

Disordered stretches follow at residues Met-1–Cys-33, Asn-65–Phe-122, Met-148–Pro-197, and Ala-240–Ala-264. Residues Thr-9 to Asp-27 are compositionally biased toward basic and acidic residues. Composition is skewed to low complexity over residues Leu-68 to Pro-89 and Gln-165 to Ser-175. The span at Val-176 to Asp-195 shows a compositional bias: basic and acidic residues. Residues Thr-241–Ser-250 are compositionally biased toward polar residues. The segment at Cys-266–Cys-290 adopts a GATA-type zinc-finger fold.

Expressed in differentiated seam cells. Expressed in the head and trunk.

The protein localises to the nucleus. Its function is as follows. Probable transcription factor. Involved in embryonic development and in vulval development in larvae, acting redundantly, at least in part, with elt-6. Perhaps acting together with elt-6, may form a positive feedback loop to initiate and maintain lin-39 gene expression to ensure proper vulval precursor cell (VPC) fate specification. Together with elt-6, acts as a downstream target of the Wnt/beta-catenin asymmetry pathway, required to adopt or maintain the seam cell fate. Required in seam cells, acting redundantly with elt-6, to promote production of alae, expression of several seam-specific genes and maintenance of seam cells in an unfused state. Plays a role in longevity. May form a transcriptional circuit with GATA factors elt-3 and elt-6. The polypeptide is Putative transcription factor egl-18 (Caenorhabditis elegans).